We begin with the raw amino-acid sequence, 202 residues long: Protein G1-like4 (202 aa).

Disordered regions lie at residues 1–44 (MDLS…RYEA) and 158–202 (RARG…GAAC). Gly residues predominate over residues 12-22 (SGGGNGGGGGS). A compositionally biased stretch (low complexity) spans 23-36 (SSSNSSPSMGAGAP). The 128-residue stretch at 41 to 168 (RYEAQKRRDW…ARGVSYEKKK (128 aa)) folds into the ALOG domain. Residues 166–170 (KKKRK) carry the Nuclear localization signal motif. The segment covering 173–186 (QQQQLQGGDSSGLH) has biased composition (low complexity). Residues 192–202 (PPPPPPAGAAC) are compositionally biased toward pro residues.

The protein belongs to the plant homeotic and developmental regulators ALOG protein family.

The protein localises to the nucleus. Probable transcription regulator that acts as a developmental regulator by promoting cell growth in response to light. This is Protein G1-like4 from Oryza sativa subsp. indica (Rice).